We begin with the raw amino-acid sequence, 68 residues long: Large ribosomal subunit protein bL31 (68 aa).

Residues Cys16, Cys18, Cys36, and Cys39 each contribute to the Zn(2+) site.

The protein belongs to the bacterial ribosomal protein bL31 family. Type A subfamily. In terms of assembly, part of the 50S ribosomal subunit. It depends on Zn(2+) as a cofactor.

In terms of biological role, binds the 23S rRNA. The protein is Large ribosomal subunit protein bL31 of Dictyoglomus thermophilum (strain ATCC 35947 / DSM 3960 / H-6-12).